The sequence spans 539 residues: DNA damage-binding protein CMR1 (539 aa).

The disordered stretch occupies residues Leu22–Ser89. Residues Glu27–Pro39 show a composition bias toward basic and acidic residues. 6 WD repeats span residues Val182–Gln223, Leu226–Asp268, Leu316–Thr356, Asn377–Leu415, Gly462–Leu505, and Ala508–Glu539.

Belongs to the WD repeat DDB2/WDR76 family.

Its function is as follows. DNA-binding protein that binds to both single- and double-stranded DNA. Binds preferentially to UV-damaged DNA. May be involved in DNA-metabolic processes. The protein is DNA damage-binding protein CMR1 of Yarrowia lipolytica (strain CLIB 122 / E 150) (Yeast).